The following is a 176-amino-acid chain: NAD(P)H-quinone oxidoreductase subunit 6, chloroplastic (176 aa).

5 helical membrane passes run 10 to 30, 32 to 52, 61 to 81, 92 to 112, and 152 to 172; these read FLLV…VLLP, PIYS…FYIL, AQLL…VMFI, LWTV…VSLI, and FFLP…GAIA.

The protein belongs to the complex I subunit 6 family. NDH is composed of at least 16 different subunits, 5 of which are encoded in the nucleus.

Its subcellular location is the plastid. It localises to the chloroplast thylakoid membrane. The catalysed reaction is a plastoquinone + NADH + (n+1) H(+)(in) = a plastoquinol + NAD(+) + n H(+)(out). The enzyme catalyses a plastoquinone + NADPH + (n+1) H(+)(in) = a plastoquinol + NADP(+) + n H(+)(out). NDH shuttles electrons from NAD(P)H:plastoquinone, via FMN and iron-sulfur (Fe-S) centers, to quinones in the photosynthetic chain and possibly in a chloroplast respiratory chain. The immediate electron acceptor for the enzyme in this species is believed to be plastoquinone. Couples the redox reaction to proton translocation, and thus conserves the redox energy in a proton gradient. The protein is NAD(P)H-quinone oxidoreductase subunit 6, chloroplastic (ndhG) of Lactuca sativa (Garden lettuce).